Here is a 224-residue protein sequence, read N- to C-terminus: Putative N-acetylmannosamine-6-phosphate 2-epimerase (224 aa).

It belongs to the NanE family.

It catalyses the reaction an N-acyl-D-glucosamine 6-phosphate = an N-acyl-D-mannosamine 6-phosphate. It functions in the pathway amino-sugar metabolism; N-acetylneuraminate degradation; D-fructose 6-phosphate from N-acetylneuraminate: step 3/5. In terms of biological role, converts N-acetylmannosamine-6-phosphate (ManNAc-6-P) to N-acetylglucosamine-6-phosphate (GlcNAc-6-P). This is Putative N-acetylmannosamine-6-phosphate 2-epimerase from Staphylococcus carnosus (strain TM300).